Here is a 357-residue protein sequence, read N- to C-terminus: Protein XRP2 (357 aa).

Residues 1-11 (MGCFFSKRRKP) show a composition bias toward basic residues. Residues 1 to 39 (MGCFFSKRRKPAQGGQQQGASQEPAAGEEKAPQYSWDQR) are disordered. G2 carries the N-myristoyl glycine lipid modification. A lipid anchor (S-palmitoyl cysteine) is attached at C3. Over residues 12–25 (AQGGQQQGASQEPA) the composition is skewed to low complexity. Positions 32–186 (PQYSWDQRAK…TWSNIHDFTP (155 aa)) constitute a C-CAP/cofactor C-like domain. Residues 105–106 (GS) and 122–125 (QQFR) each bind GTP.

It belongs to the TBCC family. Post-translationally, myristoylated on Gly-2; which may be required for membrane targeting. Palmitoylated on Cys-3; which may be required for plasma membrane targeting.

It is found in the cell membrane. In terms of biological role, acts as a GTPase-activating protein (GAP) for tubulin in concert with tubulin-specific chaperone C, but does not enhance tubulin heterodimerization. Acts as a GTPase-activating protein. May act as guanine nucleotide dissociation inhibitor towards ADP-ribosylation factor-like proteins. In Gallus gallus (Chicken), this protein is Protein XRP2 (RP2).